The following is a 560-amino-acid chain: Probable sulfate transporter MT1781 (560 aa).

The next 11 helical transmembrane spans lie at 29-49 (VLAG…YATV), 51-71 (GLPP…YALL), 79-99 (IGPE…MAAG), 105-125 (AVLA…AGTA), 138-158 (VLVG…LGTI), 184-204 (WPTF…TRWA), 207-227 (APGP…MSLD), 256-276 (ALII…VLTA), 333-353 (LIAL…LAMF), 355-375 (IAAL…LSEF), and 394-414 (AAVL…LSIL). In terms of domain architecture, STAS spans 442 to 557 (DYPQAKRVPG…MTLPTAVQAF (116 aa)).

It belongs to the SLC26A/SulP transporter (TC 2.A.53) family.

The protein resides in the cell membrane. The polypeptide is Probable sulfate transporter MT1781 (Mycobacterium tuberculosis (strain CDC 1551 / Oshkosh)).